Reading from the N-terminus, the 228-residue chain is 2-C-methyl-D-erythritol 4-phosphate cytidylyltransferase (228 aa).

The protein belongs to the IspD/TarI cytidylyltransferase family. IspD subfamily.

It catalyses the reaction 2-C-methyl-D-erythritol 4-phosphate + CTP + H(+) = 4-CDP-2-C-methyl-D-erythritol + diphosphate. The protein operates within isoprenoid biosynthesis; isopentenyl diphosphate biosynthesis via DXP pathway; isopentenyl diphosphate from 1-deoxy-D-xylulose 5-phosphate: step 2/6. Catalyzes the formation of 4-diphosphocytidyl-2-C-methyl-D-erythritol from CTP and 2-C-methyl-D-erythritol 4-phosphate (MEP). The chain is 2-C-methyl-D-erythritol 4-phosphate cytidylyltransferase from Actinobacillus pleuropneumoniae serotype 5b (strain L20).